The sequence spans 305 residues: NAD kinase (305 aa).

Asp82 functions as the Proton acceptor in the catalytic mechanism. Residues 82-83, 156-157, Arg184, Asp186, 197-202, Ala221, and Gln255 each bind NAD(+); these read DG, ND, and TAYALS.

This sequence belongs to the NAD kinase family. Requires a divalent metal cation as cofactor.

It localises to the cytoplasm. The catalysed reaction is NAD(+) + ATP = ADP + NADP(+) + H(+). In terms of biological role, involved in the regulation of the intracellular balance of NAD and NADP, and is a key enzyme in the biosynthesis of NADP. Catalyzes specifically the phosphorylation on 2'-hydroxyl of the adenosine moiety of NAD to yield NADP. The sequence is that of NAD kinase from Cupriavidus pinatubonensis (strain JMP 134 / LMG 1197) (Cupriavidus necator (strain JMP 134)).